Consider the following 124-residue polypeptide: Large ribosomal subunit protein bL12 (124 aa).

This sequence belongs to the bacterial ribosomal protein bL12 family. Homodimer. Part of the ribosomal stalk of the 50S ribosomal subunit. Forms a multimeric L10(L12)X complex, where L10 forms an elongated spine to which 2 to 4 L12 dimers bind in a sequential fashion. Binds GTP-bound translation factors.

Its function is as follows. Forms part of the ribosomal stalk which helps the ribosome interact with GTP-bound translation factors. Is thus essential for accurate translation. This is Large ribosomal subunit protein bL12 from Phocaeicola vulgatus (strain ATCC 8482 / DSM 1447 / JCM 5826 / CCUG 4940 / NBRC 14291 / NCTC 11154) (Bacteroides vulgatus).